Reading from the N-terminus, the 90-residue chain is Small ribosomal subunit protein uS17 (90 aa).

Belongs to the universal ribosomal protein uS17 family. In terms of assembly, part of the 30S ribosomal subunit.

Functionally, one of the primary rRNA binding proteins, it binds specifically to the 5'-end of 16S ribosomal RNA. This chain is Small ribosomal subunit protein uS17, found in Burkholderia thailandensis (strain ATCC 700388 / DSM 13276 / CCUG 48851 / CIP 106301 / E264).